The sequence spans 244 residues: tRNA pseudouridine synthase A (244 aa).

Catalysis depends on Asp-52, which acts as the Nucleophile. Tyr-110 contributes to the substrate binding site.

Belongs to the tRNA pseudouridine synthase TruA family. As to quaternary structure, homodimer.

It catalyses the reaction uridine(38/39/40) in tRNA = pseudouridine(38/39/40) in tRNA. Its function is as follows. Formation of pseudouridine at positions 38, 39 and 40 in the anticodon stem and loop of transfer RNAs. In Clostridium kluyveri (strain ATCC 8527 / DSM 555 / NBRC 12016 / NCIMB 10680 / K1), this protein is tRNA pseudouridine synthase A.